The following is a 204-amino-acid chain: Somatotropin (204 aa).

The first 17 residues, 1-17, serve as a signal peptide directing secretion; the sequence is MDRVLLLLSVLTLGVSS. Gln-18 carries the pyrrolidone carboxylic acid modification. Zn(2+) is bound at residue His-36. Cysteines 69 and 177 form a disulfide. Residue Glu-186 coordinates Zn(2+). The cysteines at positions 194 and 202 are disulfide-linked.

This sequence belongs to the somatotropin/prolactin family.

It localises to the secreted. Functionally, growth hormone plays an important role in growth control and is involved in the regulation of several anabolic processes. Implicated as an osmoregulatory substance important for seawater adaptation. This chain is Somatotropin (gh), found in Larimichthys crocea (Large yellow croaker).